We begin with the raw amino-acid sequence, 516 residues long: NAD(P)H-quinone oxidoreductase chain 4, chloroplastic (516 aa).

Helical transmembrane passes span 4–24 (FPWL…IFLL), 37–57 (LCIC…HFQL), 87–107 (IGPI…AWPV), 111–131 (AQLF…SFSS), 134–154 (LLLF…LLSM), 167–187 (FILY…GIGL), 208–228 (ALEV…LPII), 242–262 (HYST…YGLV), 272–292 (AHCL…IYAA), 305–325 (IAYS…SLSD), 330–350 (GAIL…FLAG), 386–406 (LALP…GIIT), 416–436 (ILIA…SLSM), and 462–482 (LFVS…PDFV).

This sequence belongs to the complex I subunit 4 family.

It is found in the plastid. The protein localises to the chloroplast thylakoid membrane. The catalysed reaction is a plastoquinone + NADH + (n+1) H(+)(in) = a plastoquinol + NAD(+) + n H(+)(out). It catalyses the reaction a plastoquinone + NADPH + (n+1) H(+)(in) = a plastoquinol + NADP(+) + n H(+)(out). This Oenothera argillicola (Appalachian evening primrose) protein is NAD(P)H-quinone oxidoreductase chain 4, chloroplastic.